Consider the following 440-residue polypeptide: Enolase (440 aa).

A (2R)-2-phosphoglycerate-binding site is contributed by Gln168. The active-site Proton donor is Glu210. Residues Asp249, Glu300, and Asp326 each contribute to the Mg(2+) site. (2R)-2-phosphoglycerate-binding residues include Lys351, Arg380, Ser381, and Lys402. Lys351 functions as the Proton acceptor in the catalytic mechanism.

This sequence belongs to the enolase family. The cofactor is Mg(2+).

The protein resides in the cytoplasm. It is found in the secreted. Its subcellular location is the cell surface. The enzyme catalyses (2R)-2-phosphoglycerate = phosphoenolpyruvate + H2O. The protein operates within carbohydrate degradation; glycolysis; pyruvate from D-glyceraldehyde 3-phosphate: step 4/5. Functionally, catalyzes the reversible conversion of 2-phosphoglycerate (2-PG) into phosphoenolpyruvate (PEP). It is essential for the degradation of carbohydrates via glycolysis. The chain is Enolase from Ureaplasma parvum serovar 3 (strain ATCC 27815 / 27 / NCTC 11736).